Reading from the N-terminus, the 1757-residue chain is E3 ubiquitin-protein ligase UBR1 (1757 aa).

A disordered region spans residues 1-24 (MADEEMDGAERMDVSPEPPLAPQR). Ala2 carries the N-acetylalanine modification. A UBR-type zinc finger spans residues 97 to 168 (QLCGKVFKSG…TGPFCVDHEP (72 aa)). Zn(2+)-binding residues include Cys99, Cys112, Cys115, Cys124, Cys127, His133, and His136. An a peptide-binding site is contributed by Phe148. Cys149 lines the Zn(2+) pocket. Residue Asp150 coordinates a peptide. Zn(2+) is bound at residue Cys151. A peptide is bound at residue Asp153. Residues Cys163 and His166 each contribute to the Zn(2+) site. The segment at 842–868 (QHSKAEHMQKKRRKQENKDEALPPPPP) is disordered. Positions 1022-1057 (RKRKAEAARLHRQKIMAQMSALQKNFIETHKLMYDN) are UBC2-binding region (U2BR). Positions 1101, 1104, 1162, 1164, 1167, and 1170 each coordinate Zn(2+). An RING-type; atypical zinc finger spans residues 1101 to 1204 (CILCQEEQEV…SGEYLCPLCK (104 aa)). Ser1182 carries the phosphoserine modification. Positions 1200, 1203, 1635, 1638, and 1661 each coordinate Zn(2+).

This sequence belongs to the E3 ubiquitin-protein ligase UBR1-like family. In terms of assembly, interacts with RECQL4. As to expression, present in skeletal muscle and liver (at protein level). Broadly expressed, with highest levels in skeletal muscle and heart. Expressed in acinar cells of the pancreas. In testes, expressed primarily in spermatogonia.

It is found in the cytoplasm. The protein resides in the cytosol. It catalyses the reaction S-ubiquitinyl-[E2 ubiquitin-conjugating enzyme]-L-cysteine + [acceptor protein]-L-lysine = [E2 ubiquitin-conjugating enzyme]-L-cysteine + N(6)-ubiquitinyl-[acceptor protein]-L-lysine.. The protein operates within protein modification; protein ubiquitination. E3 ubiquitin-protein ligase which is a component of the N-end rule pathway. Recognizes and binds proteins bearing specific N-terminal residues (N-degrons) that are destabilizing according to the N-end rule, leading to their ubiquitination and subsequent degradation. Recognizes both type-1 and type-2 N-degrons, containing positively charged amino acids (Arg, Lys and His) and bulky and hydrophobic amino acids, respectively. Does not ubiquitinate proteins that are acetylated at the N-terminus. In contrast, it strongly binds methylated N-degrons. Binds leucine and is a negative regulator of the leucine-mTOR signaling pathway, thereby controlling cell growth. The protein is E3 ubiquitin-protein ligase UBR1 of Mus musculus (Mouse).